Consider the following 396-residue polypeptide: Deoxyguanosinetriphosphate triphosphohydrolase-like protein (396 aa).

The region spanning Arg-69 to Asn-211 is the HD domain.

The protein belongs to the dGTPase family. Type 2 subfamily.

The polypeptide is Deoxyguanosinetriphosphate triphosphohydrolase-like protein (Parvibaculum lavamentivorans (strain DS-1 / DSM 13023 / NCIMB 13966)).